Consider the following 239-residue polypeptide: Fibroblast growth factor 3 (239 aa).

A signal peptide spans M1 to P17. N-linked (GlcNAc...) asparagine glycosylation is present at N65. The interval Q193 to H239 is disordered. Polar residues predominate over residues V225–H239.

It belongs to the heparin-binding growth factors family. Interacts with FGFR1 and FGFR2. Affinity between fibroblast growth factors (FGFs) and their receptors is increased by heparan sulfate glycosaminoglycans that function as coreceptors.

The protein resides in the secreted. Functionally, plays an important role in the regulation of embryonic development, cell proliferation, and cell differentiation. Required for normal ear development. The sequence is that of Fibroblast growth factor 3 (FGF3) from Homo sapiens (Human).